Reading from the N-terminus, the 211-residue chain is Urease accessory protein UreG (211 aa).

13-20 (GPVGSGKT) contributes to the GTP binding site.

It belongs to the SIMIBI class G3E GTPase family. UreG subfamily. As to quaternary structure, homodimer. UreD, UreF and UreG form a complex that acts as a GTP-hydrolysis-dependent molecular chaperone, activating the urease apoprotein by helping to assemble the nickel containing metallocenter of UreC. The UreE protein probably delivers the nickel.

Its subcellular location is the cytoplasm. Facilitates the functional incorporation of the urease nickel metallocenter. This process requires GTP hydrolysis, probably effectuated by UreG. This is Urease accessory protein UreG from Alkalilimnicola ehrlichii (strain ATCC BAA-1101 / DSM 17681 / MLHE-1).